The following is a 406-amino-acid chain: Probable tRNA sulfurtransferase (406 aa).

The region spanning 60-166 is the THUMP domain; it reads EPVMERLKQV…LNGIYLTSAK (107 aa). ATP contacts are provided by residues 184–185, 209–210, R266, G288, and Q297; these read ML and HF.

It belongs to the ThiI family.

The protein resides in the cytoplasm. The catalysed reaction is [ThiI sulfur-carrier protein]-S-sulfanyl-L-cysteine + a uridine in tRNA + 2 reduced [2Fe-2S]-[ferredoxin] + ATP + H(+) = [ThiI sulfur-carrier protein]-L-cysteine + a 4-thiouridine in tRNA + 2 oxidized [2Fe-2S]-[ferredoxin] + AMP + diphosphate. The enzyme catalyses [ThiS sulfur-carrier protein]-C-terminal Gly-Gly-AMP + S-sulfanyl-L-cysteinyl-[cysteine desulfurase] + AH2 = [ThiS sulfur-carrier protein]-C-terminal-Gly-aminoethanethioate + L-cysteinyl-[cysteine desulfurase] + A + AMP + 2 H(+). It participates in cofactor biosynthesis; thiamine diphosphate biosynthesis. Catalyzes the ATP-dependent transfer of a sulfur to tRNA to produce 4-thiouridine in position 8 of tRNAs, which functions as a near-UV photosensor. Also catalyzes the transfer of sulfur to the sulfur carrier protein ThiS, forming ThiS-thiocarboxylate. This is a step in the synthesis of thiazole, in the thiamine biosynthesis pathway. The sulfur is donated as persulfide by IscS. This chain is Probable tRNA sulfurtransferase, found in Limosilactobacillus fermentum (strain NBRC 3956 / LMG 18251) (Lactobacillus fermentum).